The chain runs to 168 residues: Cell division inhibitor SulA (168 aa).

Residues A105 to Y111 form a ftsZ binding region. Positions R161–H168 are lon protease binding.

The protein belongs to the SulA family. Interacts with FtsZ. Post-translationally, is rapidly cleaved and degraded by the Lon protease once DNA damage is repaired.

Its function is as follows. Component of the SOS system and an inhibitor of cell division. Accumulation of SulA causes rapid cessation of cell division and the appearance of long, non-septate filaments. In the presence of GTP, binds a polymerization-competent form of FtsZ in a 1:1 ratio, thus inhibiting FtsZ polymerization and therefore preventing it from participating in the assembly of the Z ring. This mechanism prevents the premature segregation of damaged DNA to daughter cells during cell division. The sequence is that of Cell division inhibitor SulA from Cronobacter turicensis (strain DSM 18703 / CCUG 55852 / LMG 23827 / z3032).